A 500-amino-acid chain; its full sequence is L-arabinose isomerase (500 aa).

The Mn(2+) site is built by Glu-306, Glu-333, His-350, and His-450.

It belongs to the arabinose isomerase family. In terms of assembly, homohexamer. Mn(2+) serves as cofactor.

The catalysed reaction is beta-L-arabinopyranose = L-ribulose. The protein operates within carbohydrate degradation; L-arabinose degradation via L-ribulose; D-xylulose 5-phosphate from L-arabinose (bacterial route): step 1/3. Functionally, catalyzes the conversion of L-arabinose to L-ribulose. This Yersinia pestis bv. Antiqua (strain Nepal516) protein is L-arabinose isomerase.